Here is a 132-residue protein sequence, read N- to C-terminus: D-ribose pyranase (132 aa).

Histidine 20 functions as the Proton donor in the catalytic mechanism. Substrate contacts are provided by residues aspartate 28, histidine 98, and 121-123 (YSN).

Belongs to the RbsD / FucU family. RbsD subfamily. Homodecamer.

The protein localises to the cytoplasm. The catalysed reaction is beta-D-ribopyranose = beta-D-ribofuranose. Its pathway is carbohydrate metabolism; D-ribose degradation; D-ribose 5-phosphate from beta-D-ribopyranose: step 1/2. In terms of biological role, catalyzes the interconversion of beta-pyran and beta-furan forms of D-ribose. The protein is D-ribose pyranase of Kosmotoga olearia (strain ATCC BAA-1733 / DSM 21960 / TBF 19.5.1).